The sequence spans 152 residues: Snaclec 5 (152 aa).

Positions 1-23 are cleaved as a signal peptide; sequence MGRFIFLSSGLLVVFLSLSGTGA. 3 disulfide bridges follow: Cys-27–Cys-38, Cys-55–Cys-148, and Cys-123–Cys-140. Positions 34 to 149 constitute a C-type lectin domain; that stretch reads YGQHCYRAFK…CASHNPFVCK (116 aa).

Belongs to the snaclec family. As to quaternary structure, heterodimer; disulfide-linked. In terms of tissue distribution, expressed by the venom gland.

It is found in the secreted. Functionally, interferes with one step of hemostasis (modulation of platelet aggregation, or coagulation cascade, for example). This Bitis arietans (African puff adder) protein is Snaclec 5.